The following is a 243-amino-acid chain: Sec-independent protein translocase protein TATB, chloroplastic (243 aa).

A chloroplast-targeting transit peptide spans 1-67 (MTPTANLLLP…SRTRRRNVIC (67 aa)). Residues 68–69 (AS) are Lumenal-facing. A helical membrane pass occupies residues 70-90 (LFGVGAPEALVIGVVALLVFG). Residues 91–243 (PKGLAEVARN…NKSQKAEGER (153 aa)) are Stromal-facing. 2 disordered regions span residues 129-165 (EIGI…PAPY) and 178-243 (IAAS…EGER). Polar residues-rich tracts occupy residues 135–152 (VSQS…NQQP) and 187–204 (NPQQ…PTTP).

The protein belongs to the TatB family. In thylakoid membranes, TATC and TATB form a large receptor complex, containing about eight TATC-TATB pairs, which binds the precursor protein. Twin arginine signal peptide promotes pH-triggered docking of TATA oligomers to TATC-TATB receptor complex, inducing a conformational switch of TATA that results in activation of the translocase. TATA dissociates from TATC-TATB upon completion of translocation.

The protein localises to the plastid. It localises to the chloroplast thylakoid membrane. Part of the twin-arginine translocation (Tat) system that transports large folded proteins containing a characteristic twin-arginine motif in their signal peptide across the thylakoid membrane. Involved in delta pH-dependent protein transport required for chloroplast development, especially thylakoid membrane formation. TATC and TATB mediate precursor recognition, whereas TATA facilitates translocation. The sequence is that of Sec-independent protein translocase protein TATB, chloroplastic from Zea mays (Maize).